Reading from the N-terminus, the 368-residue chain is Phospho-N-acetylmuramoyl-pentapeptide-transferase (368 aa).

Helical transmembrane passes span 30–50 (AAAITALLITLFVGPGFIKYL), 72–92 (LPTMGGLLIIFSIEISVLLWS), 95–115 (IDPHVWLIMLAILWMGIIGFI), 139–159 (VTLGLVVGCYTWYDPSFSVLL), 169–189 (YLTIDYGYFYIPIVIFIITAV), 208–228 (AIVVMGLGGFSYLAGNAVYAV), 238–258 (GGEIAVVSMAIVMACVGFLWF), 264–286 (EIIMGDTGSLALGSAIAVIALLI), and 345–365 (KIVIRFWILTILFFLASLMTL).

Belongs to the glycosyltransferase 4 family. MraY subfamily. The cofactor is Mg(2+).

Its subcellular location is the cell inner membrane. It catalyses the reaction UDP-N-acetyl-alpha-D-muramoyl-L-alanyl-gamma-D-glutamyl-meso-2,6-diaminopimeloyl-D-alanyl-D-alanine + di-trans,octa-cis-undecaprenyl phosphate = di-trans,octa-cis-undecaprenyl diphospho-N-acetyl-alpha-D-muramoyl-L-alanyl-D-glutamyl-meso-2,6-diaminopimeloyl-D-alanyl-D-alanine + UMP. It participates in cell wall biogenesis; peptidoglycan biosynthesis. In terms of biological role, catalyzes the initial step of the lipid cycle reactions in the biosynthesis of the cell wall peptidoglycan: transfers peptidoglycan precursor phospho-MurNAc-pentapeptide from UDP-MurNAc-pentapeptide onto the lipid carrier undecaprenyl phosphate, yielding undecaprenyl-pyrophosphoryl-MurNAc-pentapeptide, known as lipid I. This Pelodictyon phaeoclathratiforme (strain DSM 5477 / BU-1) protein is Phospho-N-acetylmuramoyl-pentapeptide-transferase.